The sequence spans 305 residues: NAD kinase (305 aa).

The active-site Proton acceptor is the Asp-84. Residues 84 to 85, 159 to 160, His-170, Arg-187, Asp-189, 200 to 205, and Gln-260 contribute to the NAD(+) site; these read DG, NE, and TAYSLS.

The protein belongs to the NAD kinase family. A divalent metal cation serves as cofactor.

Its subcellular location is the cytoplasm. The catalysed reaction is NAD(+) + ATP = ADP + NADP(+) + H(+). In terms of biological role, involved in the regulation of the intracellular balance of NAD and NADP, and is a key enzyme in the biosynthesis of NADP. Catalyzes specifically the phosphorylation on 2'-hydroxyl of the adenosine moiety of NAD to yield NADP. The polypeptide is NAD kinase (Pasteurella multocida (strain Pm70)).